We begin with the raw amino-acid sequence, 140 residues long: MSVPASSFLLLCFLMNSFSPAQSYILPHCEPVNETVSVEKDGCPKCLVFQTAICSGHCLTKEPVYKSPFSNIYQHVCTYRDVRYETVRLPDCRPGVDPHVTYPVALSCECTLCTMDTSDCTIESLNPDFCMTQKEYILDY.

The first 23 residues, M1–S23, serve as a signal peptide directing secretion. Cystine bridges form between C29-C77, C43-C92, C46-C130, C54-C108, C58-C110, and C113-C120. The N-linked (GlcNAc...) asparagine glycan is linked to N33.

The protein belongs to the glycoprotein hormones subunit beta family. As to quaternary structure, heterodimer of an alpha and a beta chain.

Its subcellular location is the secreted. In terms of biological role, involved in gametogenesis and steroidogenesis. The chain is Gonadotropin subunit beta-2 (cgbb) from Ictalurus punctatus (Channel catfish).